The chain runs to 402 residues: Multidrug resistance protein MdtH (402 aa).

Helical transmembrane passes span 13-33 (YFLL…FPLI), 45-65 (ALMV…LGIF), 99-116 (PWLL…GTLF), 139-159 (LLMM…SWLL), 165-185 (LVCA…AWLL), 214-234 (VLTL…LPIM), 244-264 (AVKW…YPIA), 277-297 (LMAG…VGNL), 300-322 (LFTL…ETLS), 340-360 (LGLA…FDMG), and 368-388 (LPWM…GWQF).

The protein belongs to the major facilitator superfamily. DHA1 family. MdtH (TC 2.A.1.2.21) subfamily.

The protein resides in the cell inner membrane. The polypeptide is Multidrug resistance protein MdtH (Citrobacter koseri (strain ATCC BAA-895 / CDC 4225-83 / SGSC4696)).